A 514-amino-acid polypeptide reads, in one-letter code: Prespore vesicle protein (514 aa).

A signal peptide spans 1-18 (MRLYLLSLILVFYASVSS). 2 Follistatin-like domains span residues 40 to 62 (LCGTHYCPPGSTCESKHGHYICR) and 240 to 262 (TCETKKCEASQVCIMVNGDAQCI). The segment covering 285-297 (QRNAKPAQQQRSA) has biased composition (polar residues). Residues 285–514 (QRNAKPAQQQ…QARPATQKRN (230 aa)) form a disordered region. Composition is skewed to low complexity over residues 328 to 391 (QHNA…HTAA), 398 to 413 (AAQQHAKPAAHGAKPA), and 424 to 457 (AAQQHAKPAAHTAAKPVQHNAAQQHAKPAAKPAK). The segment covering 480–508 (RIRQQNLVKQAAQKKQTSQRAASKNQARP) has biased composition (polar residues).

The polypeptide is Prespore vesicle protein (psvA) (Dictyostelium discoideum (Social amoeba)).